A 230-amino-acid polypeptide reads, in one-letter code: MCGNNMSAPMPAVVPAARKATAAVIFLHGLGDTGHGWAEAFAGIKSSHIKYICPHAPVMPVTLNMSMMMPSWFDIIGLSPDSQEDESGIKQAAETVKALIDQEVKNGIPSNRIILGGFSQGGALSLYTALTTQQKLAGVTALSCWLPLRASFSQGPINSANRDISVLQCHGDCDPLVPLMFGSLTVERLKGLVNPANVTFKVYEGMMHSSCQQEMMDVKYFIDKLLPPID.

Active-site charge relay system residues include serine 119, aspartate 174, and histidine 208. Lysine 224 carries the post-translational modification N6-acetyllysine.

This sequence belongs to the AB hydrolase superfamily. AB hydrolase 2 family. In terms of assembly, homodimer. As to expression, ubiquitous. Detected at low levels in all tissues tested.

The protein localises to the cytoplasm. It localises to the cell membrane. Its subcellular location is the nucleus membrane. It is found in the endoplasmic reticulum. It catalyses the reaction S-hexadecanoyl-L-cysteinyl-[protein] + H2O = L-cysteinyl-[protein] + hexadecanoate + H(+). The catalysed reaction is 1-hexadecanoyl-sn-glycero-3-phosphocholine + H2O = sn-glycerol 3-phosphocholine + hexadecanoate + H(+). It carries out the reaction a 1-(9Z-octadecenoyl)-2-acyl-sn-glycero-3-phosphocholine + H2O = a 2-acyl-sn-glycero-3-phosphocholine + (9Z)-octadecenoate + H(+). Its function is as follows. Acts as an acyl-protein thioesterase. Hydrolyzes fatty acids from S-acylated cysteine residues in proteins such as trimeric G alpha proteins or HRAS. Acts as a palmitoyl thioesterase that catalyzes depalmitoylation of proteins, such as ADRB2, KCNMA1 and SQSTM1. Acts as a negative regulator of autophagy by mediating palmitoylation of SQSTM1, decreasing affinity between SQSTM1 and ATG8 proteins and recruitment of ubiquitinated cargo proteins to autophagosomes. Acts as a lysophospholipase and hydrolyzes lysophosphatidylcholine (lyso-PC). Also hydrolyzes lysophosphatidylethanolamine (lyso-PE), lysophosphatidylinositol (lyso-PI) and lysophosphatidylserine (lyso-PS). Has much higher thioesterase activity than lysophospholipase activity. Contributes to the production of lysophosphatidic acid (LPA) during blood coagulation by recognizing and cleaving plasma phospholipids to generate lysophospholipids which in turn act as substrates for ENPP2 to produce LPA. The polypeptide is Acyl-protein thioesterase 1 (Lypla1) (Rattus norvegicus (Rat)).